Consider the following 432-residue polypeptide: Adenylosuccinate synthetase (432 aa).

Residues G13 to K19 and G41 to T43 each bind GTP. The active-site Proton acceptor is D14. 2 residues coordinate Mg(2+): D14 and G41. Residues D14–K17, N39–H42, T131, R145, Q226, T241, and R305 contribute to the IMP site. Catalysis depends on H42, which acts as the Proton donor. S301–R307 is a binding site for substrate. GTP-binding positions include R307, K333 to D335, and S416 to G418.

The protein belongs to the adenylosuccinate synthetase family. As to quaternary structure, homodimer. Requires Mg(2+) as cofactor.

It localises to the cytoplasm. It catalyses the reaction IMP + L-aspartate + GTP = N(6)-(1,2-dicarboxyethyl)-AMP + GDP + phosphate + 2 H(+). It participates in purine metabolism; AMP biosynthesis via de novo pathway; AMP from IMP: step 1/2. Functionally, plays an important role in the de novo pathway of purine nucleotide biosynthesis. Catalyzes the first committed step in the biosynthesis of AMP from IMP. This chain is Adenylosuccinate synthetase, found in Neisseria meningitidis serogroup A / serotype 4A (strain DSM 15465 / Z2491).